The chain runs to 51 residues: Large ribosomal subunit protein eL39 (51 aa).

It belongs to the eukaryotic ribosomal protein eL39 family.

This Methanococcus aeolicus (strain ATCC BAA-1280 / DSM 17508 / OCM 812 / Nankai-3) protein is Large ribosomal subunit protein eL39.